We begin with the raw amino-acid sequence, 128 residues long: Phosphoribosyl-AMP cyclohydrolase (128 aa).

D79 is a binding site for Mg(2+). C80 provides a ligand contact to Zn(2+). Mg(2+) is bound by residues D81 and D83. The Zn(2+) site is built by C97 and C104.

This sequence belongs to the PRA-CH family. Homodimer. Requires Mg(2+) as cofactor. It depends on Zn(2+) as a cofactor.

It is found in the cytoplasm. The catalysed reaction is 1-(5-phospho-beta-D-ribosyl)-5'-AMP + H2O = 1-(5-phospho-beta-D-ribosyl)-5-[(5-phospho-beta-D-ribosylamino)methylideneamino]imidazole-4-carboxamide. The protein operates within amino-acid biosynthesis; L-histidine biosynthesis; L-histidine from 5-phospho-alpha-D-ribose 1-diphosphate: step 3/9. In terms of biological role, catalyzes the hydrolysis of the adenine ring of phosphoribosyl-AMP. This Saccharophagus degradans (strain 2-40 / ATCC 43961 / DSM 17024) protein is Phosphoribosyl-AMP cyclohydrolase.